We begin with the raw amino-acid sequence, 540 residues long: T-complex protein 1 subunit alpha (540 aa).

Belongs to the TCP-1 chaperonin family. As to quaternary structure, component of the T-complex protein 1 (TCP1) complex.

The protein resides in the cytoplasm. In terms of biological role, molecular chaperone; assists the folding of proteins upon ATP hydrolysis. The sequence is that of T-complex protein 1 subunit alpha (TCP1) from Encephalitozoon cuniculi (strain GB-M1) (Microsporidian parasite).